A 339-amino-acid polypeptide reads, in one-letter code: Dihydroorotate dehydrogenase (quinone) (339 aa).

FMN is bound by residues 62–66 (AGLDK) and Thr86. Residue Lys66 participates in substrate binding. Substrate is bound at residue 111–115 (NRMGF). Asn139 and Asn172 together coordinate FMN. Residue Asn172 coordinates substrate. Ser175 acts as the Nucleophile in catalysis. Asn177 contacts substrate. Residues Lys217 and Thr245 each coordinate FMN. 246–247 (NT) is a substrate binding site. Residues Gly268, Gly297, and 318-319 (YS) contribute to the FMN site.

This sequence belongs to the dihydroorotate dehydrogenase family. Type 2 subfamily. In terms of assembly, monomer. FMN serves as cofactor.

The protein localises to the cell membrane. It catalyses the reaction (S)-dihydroorotate + a quinone = orotate + a quinol. Its pathway is pyrimidine metabolism; UMP biosynthesis via de novo pathway; orotate from (S)-dihydroorotate (quinone route): step 1/1. Functionally, catalyzes the conversion of dihydroorotate to orotate with quinone as electron acceptor. This is Dihydroorotate dehydrogenase (quinone) from Shewanella amazonensis (strain ATCC BAA-1098 / SB2B).